The sequence spans 117 residues: DNA-directed RNA polymerase subunit omega (117 aa).

Over residues 96–105 (KEEAEEEAKQ) the composition is skewed to basic and acidic residues. Residues 96 to 117 (KEEAEEEAKQKNSRAAKAAAAE) form a disordered region. The segment covering 108–117 (SRAAKAAAAE) has biased composition (low complexity).

The protein belongs to the RNA polymerase subunit omega family. As to quaternary structure, the RNAP catalytic core consists of 2 alpha, 1 beta, 1 beta' and 1 omega subunit. When a sigma factor is associated with the core the holoenzyme is formed, which can initiate transcription.

The enzyme catalyses RNA(n) + a ribonucleoside 5'-triphosphate = RNA(n+1) + diphosphate. Its function is as follows. Promotes RNA polymerase assembly. Latches the N- and C-terminal regions of the beta' subunit thereby facilitating its interaction with the beta and alpha subunits. This is DNA-directed RNA polymerase subunit omega from Lactococcus lactis subsp. cremoris (strain SK11).